The following is a 443-amino-acid chain: Ribulose bisphosphate carboxylase large chain (443 aa).

Lys7 is modified (N6,N6,N6-trimethyllysine). Asn116 and Thr166 together coordinate substrate. The Proton acceptor role is filled by Lys168. Lys170 provides a ligand contact to substrate. Lys194, Asp196, and Glu197 together coordinate Mg(2+). Residue Lys194 is modified to N6-carboxylysine. Residue His287 is the Proton acceptor of the active site. Arg288, His320, and Ser372 together coordinate substrate.

Belongs to the RuBisCO large chain family. Type I subfamily. As to quaternary structure, heterohexadecamer of 8 large chains and 8 small chains; disulfide-linked. The disulfide link is formed within the large subunit homodimers. Mg(2+) is required as a cofactor. The disulfide bond which can form in the large chain dimeric partners within the hexadecamer appears to be associated with oxidative stress and protein turnover.

It localises to the plastid. The protein localises to the chloroplast. It catalyses the reaction 2 (2R)-3-phosphoglycerate + 2 H(+) = D-ribulose 1,5-bisphosphate + CO2 + H2O. The catalysed reaction is D-ribulose 1,5-bisphosphate + O2 = 2-phosphoglycolate + (2R)-3-phosphoglycerate + 2 H(+). In terms of biological role, ruBisCO catalyzes two reactions: the carboxylation of D-ribulose 1,5-bisphosphate, the primary event in carbon dioxide fixation, as well as the oxidative fragmentation of the pentose substrate in the photorespiration process. Both reactions occur simultaneously and in competition at the same active site. The protein is Ribulose bisphosphate carboxylase large chain of Abies sachalinensis (Sakhalin fir).